The following is a 271-amino-acid chain: Ribosomal RNA small subunit methyltransferase A (271 aa).

The S-adenosyl-L-methionine site is built by Leu20, Gly45, Glu66, Asp90, and Asn112.

Belongs to the class I-like SAM-binding methyltransferase superfamily. rRNA adenine N(6)-methyltransferase family. RsmA subfamily.

It localises to the cytoplasm. The catalysed reaction is adenosine(1518)/adenosine(1519) in 16S rRNA + 4 S-adenosyl-L-methionine = N(6)-dimethyladenosine(1518)/N(6)-dimethyladenosine(1519) in 16S rRNA + 4 S-adenosyl-L-homocysteine + 4 H(+). In terms of biological role, specifically dimethylates two adjacent adenosines (A1518 and A1519) in the loop of a conserved hairpin near the 3'-end of 16S rRNA in the 30S particle. May play a critical role in biogenesis of 30S subunits. In Blochmanniella floridana, this protein is Ribosomal RNA small subunit methyltransferase A.